The sequence spans 353 residues: Soluble interferon alpha/beta receptor OPG204 (353 aa).

The first 21 residues, 1–21 (MTMKMMVHIYFVSLSLLLLLF), serve as a signal peptide directing secretion. 2 consecutive Ig-like C2-type domains span residues 67 to 139 (LGEP…KNGD) and 157 to 239 (PKTY…IVVS). 2 cysteine pairs are disulfide-bonded: C75–C131 and C174–C223. 5 N-linked (GlcNAc...) asparagine; by host glycosylation sites follow: N119, N184, N263, N271, and N323. One can recognise an Ig-like V-type domain in the interval 248–347 (PSQDHRFKLI…HNYYFEKTLT (100 aa)). C274 and C335 form a disulfide bridge.

Belongs to the interleukin-1 receptor family. As to quaternary structure, interacts with host IFNA1.

It localises to the secreted. Functionally, counteracts the antiviral effects of host IFN-alpha/beta and key IFN-inducible proteins involved in viral RNA degradation suxh as host OAS1. Acts as a soluble IFN-alpha receptor and thus inhibits the interaction between host IFN-alpha and its receptor. The protein is Soluble interferon alpha/beta receptor OPG204 (OPG204) of Homo sapiens (Human).